We begin with the raw amino-acid sequence, 67 residues long: uncharacterized protein (67 aa).

This is an uncharacterized protein from Acidianus sp. F28 (AFV-2).